Consider the following 216-residue polypeptide: LexA repressor (216 aa).

A DNA-binding region (H-T-H motif) is located at residues 28-48 (RAEIAAEFGFSSPNAAEEHLR). Catalysis depends on for autocatalytic cleavage activity residues Ser-134 and Lys-171.

Belongs to the peptidase S24 family. As to quaternary structure, homodimer.

The catalysed reaction is Hydrolysis of Ala-|-Gly bond in repressor LexA.. Functionally, represses a number of genes involved in the response to DNA damage (SOS response), including recA and lexA. In the presence of single-stranded DNA, RecA interacts with LexA causing an autocatalytic cleavage which disrupts the DNA-binding part of LexA, leading to derepression of the SOS regulon and eventually DNA repair. In Ralstonia pickettii (strain 12J), this protein is LexA repressor.